The sequence spans 311 residues: Acetyl-coenzyme A carboxylase carboxyl transferase subunit alpha (311 aa).

The CoA carboxyltransferase C-terminal domain maps to 32–289 (ELNLLEERLR…KSVLEQKLAQ (258 aa)).

The protein belongs to the AccA family. Acetyl-CoA carboxylase is a heterohexamer composed of biotin carboxyl carrier protein (AccB), biotin carboxylase (AccC) and two subunits each of ACCase subunit alpha (AccA) and ACCase subunit beta (AccD).

The protein localises to the cytoplasm. The catalysed reaction is N(6)-carboxybiotinyl-L-lysyl-[protein] + acetyl-CoA = N(6)-biotinyl-L-lysyl-[protein] + malonyl-CoA. The protein operates within lipid metabolism; malonyl-CoA biosynthesis; malonyl-CoA from acetyl-CoA: step 1/1. Component of the acetyl coenzyme A carboxylase (ACC) complex. First, biotin carboxylase catalyzes the carboxylation of biotin on its carrier protein (BCCP) and then the CO(2) group is transferred by the carboxyltransferase to acetyl-CoA to form malonyl-CoA. This chain is Acetyl-coenzyme A carboxylase carboxyl transferase subunit alpha, found in Exiguobacterium sibiricum (strain DSM 17290 / CCUG 55495 / CIP 109462 / JCM 13490 / 255-15).